Consider the following 148-residue polypeptide: Large ribosomal subunit protein uL13 (148 aa).

It belongs to the universal ribosomal protein uL13 family. As to quaternary structure, part of the 50S ribosomal subunit.

Functionally, this protein is one of the early assembly proteins of the 50S ribosomal subunit, although it is not seen to bind rRNA by itself. It is important during the early stages of 50S assembly. This chain is Large ribosomal subunit protein uL13, found in Ureaplasma urealyticum serovar 10 (strain ATCC 33699 / Western).